The primary structure comprises 775 residues: Melanoma-associated antigen D1 (775 aa).

Residues 37 to 330 (SEAPPTSQAT…PARQTPSAWQ (294 aa)) are disordered. The segment covering 39 to 50 (APPTSQATAAAS) has biased composition (low complexity). 6 stretches are compositionally biased toward polar residues: residues 52–63 (PNASPQSSQPPT), 84–100 (KAQN…SQAR), 150–180 (GQNT…NQPK), 223–237 (AQTS…NVES), 250–260 (NNLNVEENSNG), and 297–330 (LAWQ…SAWQ). 19 consecutive repeat copies span residues 293-298 (WQTPLA), 299-304 (WQNPSG), 305-310 (WQNQTA), 329-334 (WQNPVA), 335-340 (WQNPVI), 341-346 (WPNPVI), 347-352 (WQNPVI), 353-358 (WPNPIV), 359-364 (WPGPIV), 365-370 (WPNPMA), 371-376 (WQSTPG), 377-382 (WQSPPS), 383-388 (WQAPPS), 389-394 (WQSPQD), 395-400 (WQGPPD), 401-406 (WQLPPD), 407-412 (WSMPPD), 413-418 (WSFPSD), and 419-424 (WPFPPD). Positions 293-441 (WQTPLAWQNP…IPPDWQNLRP (149 aa)) are 22 X 6 AA tandem repeats of W-[PQ]-X-P-X-X. The disordered stretch occupies residues 374 to 407 (TPGWQSPPSWQAPPSWQSPQDWQGPPDWQLPPDW). Over residues 375-406 (PGWQSPPSWQAPPSWQSPQDWQGPPDWQLPPD) the composition is skewed to low complexity. Residues 425-429 (WIPAD) form a 20; approximate repeat. 2 repeat units span residues 430–435 (WPIPPD) and 436–441 (WQNLRP). A compositionally biased stretch (low complexity) spans 437–452 (QNLRPSPNLRSSPNSR). The segment at 437-463 (QNLRPSPNLRSSPNSRASQNQGPPQPR) is disordered. The MAGE domain occupies 468 to 666 (LQERANKLVK…RDWTAQFMEA (199 aa)).

As to quaternary structure, interacts with DLX5, DLX7 and MSX2 and forms homomultimers. Interacts with UNC5A. Interacts with TRIM28 and PJA1. Interacts with NGFR/p75NTR and RORA. In terms of tissue distribution, ubiquitous and in the seminiferous tubules expressed in Sertoli cells but not in germ cells. Expression decreases in all tissues with increased age and is detectable only in brain cortex and lung.

It localises to the cytoplasm. The protein resides in the cell membrane. It is found in the nucleus. Involved in the apoptotic response after nerve growth factor (NGF) binding in neuronal cells. Inhibits cell cycle progression, and facilitates NGFR-mediated apoptosis. May act as a regulator of the function of DLX family members. May enhance ubiquitin ligase activity of RING-type zinc finger-containing E3 ubiquitin-protein ligases. Proposed to act through recruitment and/or stabilization of the Ubl-conjugating enzyme (E2) at the E3:substrate complex. Plays a role in the circadian rhythm regulation. May act as RORA co-regulator, modulating the expression of core clock genes such as BMAL1 and NFIL3, induced, or NR1D1, repressed. The protein is Melanoma-associated antigen D1 (Maged1) of Rattus norvegicus (Rat).